The primary structure comprises 115 residues: Putative TGFB1-induced anti-apoptotic factor 1 (115 aa).

As to expression, not detectable in normal kidney and liver. Up-regulated in chronic and acute allograft rejection: expressed in the inflammatory infiltrate and in tubular epithelial cells.

It is found in the nucleus. Its function is as follows. Inhibits the cytotoxic effects of TNF-alpha and overexpressed TNF receptor adapters TRADD, FADD, and RIPK1. Involved in TGF-beta1 inhibition of IkappaB-alpha expression and suppression of TNF-mediated IkappaB-alpha degradation. The polypeptide is Putative TGFB1-induced anti-apoptotic factor 1 (MYO18A) (Homo sapiens (Human)).